Here is a 738-residue protein sequence, read N- to C-terminus: Protein Aster-B (738 aa).

Residues 1 to 81 (MKGFKLSCTA…SGGKNSKKSQ (81 aa)) form a disordered region. Residues 8–19 (CTASNSNRSTPA) show a composition bias toward polar residues. Phosphoserine is present on residues S28 and S30. Residues 41–51 (MVEKGSDHSSD) are compositionally biased toward basic and acidic residues. Residues 59 to 70 (QGVQRSCSSQSG) show a composition bias toward low complexity. Positions 96–163 (EDFRKLFKQL…KDICSMTKEK (68 aa)) constitute a GRAM domain. The disordered stretch occupies residues 254–299 (EENEVNDSSSKSSIETKPDASPQLPKKSITNSTLTSTGSSEAPVSF). Positions 259–268 (NDSSSKSSIE) are enriched in polar residues. The residue at position 274 (S274) is a Phosphoserine. A compositionally biased stretch (polar residues) spans 281–295 (SITNSTLTSTGSSEA). The region spanning 372-543 (SGRQYVNEVF…ELTKTESTYL (172 aa)) is the VASt domain. The residue at position 389 (Y389) is a Phosphotyrosine. Phosphoserine occurs at positions 550 and 581. T584, T585, and T587 each carry phosphothreonine. A helical transmembrane segment spans residues 623-643 (LLLVISCVICFSLVLLVVLNM).

Highly expressed in the adrenal gland (at protein level) and brain. Also found in the kidney, testis and macrophages.

It is found in the endoplasmic reticulum membrane. The protein localises to the cell membrane. Its function is as follows. Cholesterol transporter that mediates non-vesicular transport of cholesterol from the plasma membrane (PM) to the endoplasmic reticulum (ER). Contains unique domains for binding cholesterol and the PM, thereby serving as a molecular bridge for the transfer of cholesterol from the PM to the ER. Plays a crucial role in cholesterol homeostasis in the adrenal gland and has the unique ability to localize to the PM based on the level of membrane cholesterol. In lipid-poor conditions localizes to the ER membrane and in response to excess cholesterol in the PM is recruited to the endoplasmic reticulum-plasma membrane contact sites (EPCS) which is mediated by the GRAM domain. At the EPCS, the sterol-binding VASt/ASTER domain binds to the cholesterol in the PM and facilitates its transfer from the PM to ER. The sequence is that of Protein Aster-B (Gramd1b) from Mus musculus (Mouse).